The following is a 380-amino-acid chain: Cytochrome b (380 aa).

4 helical membrane passes run F34–A54, W78–I99, W114–L134, and F179–T199. Residues H84 and H98 each contribute to the heme b site. Heme b contacts are provided by H183 and H197. H202 contacts a ubiquinone. 4 consecutive transmembrane segments (helical) span residues T227 to S247, L289 to H309, L321 to S341, and F348 to P368.

It belongs to the cytochrome b family. The cytochrome bc1 complex contains 11 subunits: 3 respiratory subunits (MT-CYB, CYC1 and UQCRFS1), 2 core proteins (UQCRC1 and UQCRC2) and 6 low-molecular weight proteins (UQCRH/QCR6, UQCRB/QCR7, UQCRQ/QCR8, UQCR10/QCR9, UQCR11/QCR10 and a cleavage product of UQCRFS1). This cytochrome bc1 complex then forms a dimer. Requires heme b as cofactor.

It localises to the mitochondrion inner membrane. Functionally, component of the ubiquinol-cytochrome c reductase complex (complex III or cytochrome b-c1 complex) that is part of the mitochondrial respiratory chain. The b-c1 complex mediates electron transfer from ubiquinol to cytochrome c. Contributes to the generation of a proton gradient across the mitochondrial membrane that is then used for ATP synthesis. This is Cytochrome b (MT-CYB) from Eudyptes chrysolophus (Macaroni penguin).